Here is a 1262-residue protein sequence, read N- to C-terminus: Separin homolog sep-1 (1262 aa).

One can recognise a Peptidase C50 domain in the interval 957–1051 (VQNAYYILDP…SVRTIPQALG (95 aa)). Cysteine 1040 is a catalytic residue. Positions 1147–1262 (KDQRNLPQTP…ARTPSRSRNL (116 aa)) are disordered. Polar residues-rich tracts occupy residues 1151-1162 (NLPQTPKTSART) and 1177-1197 (FVTS…NKSP). Low complexity predominate over residues 1243–1262 (TPTTRTTRSSARTPSRSRNL).

Forms a complex with securin-like protein ify-1 (via C-terminus). Interaction with ify-1 stabilizes sep-1. Also maintains the complex in the cytoplasm during interphase and recruits it to chromosomes during the first meiotic division. In terms of tissue distribution, expressed in oocytes. Expressed in male germline. Expressed in spermatocytes but undetectable in spermatids (at protein level).

It is found in the cytoplasm. Its subcellular location is the chromosome. The protein resides in the cytoplasmic granule. The protein localises to the cytoskeleton. It localises to the microtubule organizing center. It is found in the centrosome. Its subcellular location is the spindle. The protein resides in the cleavage furrow. The protein localises to the midbody. The catalysed reaction is All bonds known to be hydrolyzed by this endopeptidase have arginine in P1 and an acidic residue in P4. P6 is often occupied by an acidic residue or by a hydroxy-amino-acid residue, the phosphorylation of which enhances cleavage.. Probably maintained in an inactive state via its interaction with securin ify-1 which acts as a pseudosubstrate thereby blocking access to the catalytic site. Upon ify-1 degradation at the onset of anaphase, sep-1 is likely to become active. In addition, interaction with ify-1 stabilizes sep-1. Its function is as follows. Cysteine protease, which plays a central role in homologous chromosome separation during meiosis I and in sister chromatid separation during embryonic mitosis. Promotes chromosome/sister chromatid segregation by cleaving the scc-1 (mitosis) and rec-8 (meiosis) subunits of the cohesin complex at the onset of anaphase. May cleave histone H3-like protein cpar-1 during meiosis I metaphase-anaphase transition. Promotes cortical granule exocytosis after oocyte fertilization during the first meiotic anaphase. Essential for embryonic cytokinesis by regulating rab-11-positive vesicle trafficking at the plasma membrane at the cleavage furrow and midbody. Regulates centriole segregation during spermatocyte meiosis. Required for embryonic anterior-posterior axis formation. This Caenorhabditis elegans protein is Separin homolog sep-1.